The primary structure comprises 1476 residues: Coiled-coil domain-containing protein 88B (1476 aa).

The stretch at 253 to 481 forms a coiled coil; it reads SHHLALQLAN…RGLLQVLQGQ (229 aa). Disordered regions lie at residues 427 to 451, 509 to 706, 825 to 866, and 1323 to 1476; these read QRSL…SLQD, VAFD…EGAL, RRQW…ERRE, and LMRP…SLSQ. A Phosphoserine modification is found at serine 436. Positions 572-586 are enriched in polar residues; it reads SDWSPQESGSPVETQ. Residue serine 596 is modified to Phosphoserine. Composition is skewed to basic and acidic residues over residues 678–690, 825–834, and 842–866; these read EARE…EGTV, RRQWEREGSR, and AEER…ERRE. Residues 720 to 1303 adopt a coiled-coil conformation; that stretch reads LASGVAEQEA…KIMDQYRVLE (584 aa). Residues serine 1348 and serine 1379 each carry the phosphoserine modification. Residues 1448–1469 are compositionally biased toward basic and acidic residues; the sequence is LQEHETDANREGPEVQEPEKRP.

Belongs to the CCDC88 family. In terms of assembly, homodimer. Interacts with DOCK8. Interacts (via C-terminus) with intact microtubules. Interacts with dynein-dynactin motor complex. Interacts (via C-terminus) with HSPA5. In terms of tissue distribution, expressed in endothelium (at protein level). Expressed in NK cells (at protein level).

Its subcellular location is the membrane. It is found in the cytoplasm. The protein resides in the cytoskeleton. It localises to the microtubule organizing center. The protein localises to the endoplasmic reticulum. Its subcellular location is the golgi apparatus. Acts as a positive regulator of T-cell maturation and inflammatory function. Required for several functions of T-cells, in both the CD4(+) and the CD8(+) compartments and this includes expression of cell surface markers of activation, proliferation, and cytokine production in response to specific or non-specific stimulation. Enhances NK cell cytotoxicity by positively regulating polarization of microtubule-organizing center (MTOC) to cytotoxic synapse, lytic granule transport along microtubules, and dynein-mediated clustering to MTOC. Interacts with HSPA5 and stabilizes the interaction between HSPA5 and ERN1, leading to suppression of ERN1-induced JNK activation and endoplasmic reticulum stress-induced apoptosis. The protein is Coiled-coil domain-containing protein 88B (CCDC88B) of Homo sapiens (Human).